The sequence spans 81 residues: Delta-conotoxin-like Ac6.3 (81 aa).

The first 22 residues, 1–22, serve as a signal peptide directing secretion; it reads MKLTCVMIVAVLFLTAWTFVTA. The propeptide occupies 23–51; it reads DDSRNGLENLSPKARHEMKNPEASKSNKR. Disulfide bonds link cysteine 54–cysteine 69, cysteine 61–cysteine 73, and cysteine 68–cysteine 78.

The protein belongs to the conotoxin O1 superfamily. Expressed by the venom duct.

The protein resides in the secreted. Its function is as follows. Delta-conotoxins bind to site 6 of voltage-gated sodium channels (Nav) and inhibit the inactivation process. The chain is Delta-conotoxin-like Ac6.3 from Conus achatinus (Little frog cone).